Reading from the N-terminus, the 631-residue chain is Chaperone protein HtpG (631 aa).

The a; substrate-binding stretch occupies residues 1–339 (MSAQKETLGF…SNDLPLNVSR (339 aa)). The tract at residues 340-556 (EILQESKDID…EHDMSAHLER (217 aa)) is b. A c region spans residues 557–631 (MLKAAGQKIE…INKLMLELSV (75 aa)).

It belongs to the heat shock protein 90 family. As to quaternary structure, homodimer.

It is found in the cytoplasm. In terms of biological role, molecular chaperone. Has ATPase activity. The protein is Chaperone protein HtpG of Chromobacterium violaceum (strain ATCC 12472 / DSM 30191 / JCM 1249 / CCUG 213 / NBRC 12614 / NCIMB 9131 / NCTC 9757 / MK).